The chain runs to 278 residues: Large ribosomal subunit protein uL2 (278 aa).

Disordered regions lie at residues 1-53 (MAIR…TTRH) and 224-278 (VVMN…NKKR). Residues 23-33 (EITRSTPEKSL) show a composition bias toward basic and acidic residues. Over residues 258–267 (RNPNRYSNNM) the composition is skewed to polar residues. Basic residues predominate over residues 269–278 (VRRRRPNKKR).

The protein belongs to the universal ribosomal protein uL2 family. In terms of assembly, part of the 50S ribosomal subunit. Forms a bridge to the 30S subunit in the 70S ribosome.

One of the primary rRNA binding proteins. Required for association of the 30S and 50S subunits to form the 70S ribosome, for tRNA binding and peptide bond formation. It has been suggested to have peptidyltransferase activity; this is somewhat controversial. Makes several contacts with the 16S rRNA in the 70S ribosome. This chain is Large ribosomal subunit protein uL2, found in Corynebacterium aurimucosum (strain ATCC 700975 / DSM 44827 / CIP 107346 / CN-1) (Corynebacterium nigricans).